Reading from the N-terminus, the 187-residue chain is Homeobox protein engrailed-like ceh-16 (187 aa).

Disordered regions lie at residues 14 to 43, 60 to 100, and 144 to 167; these read PYPC…NGTP, SDRP…DQLD, and KSTS…HPSI. The segment covering 20 to 39 has biased composition (low complexity); it reads PTISTPATSPSSISPTFASP. Positions 87–146 form a DNA-binding region, homeobox; that stretch reads EKRPRTAFTGDQLDRLKTEFRESRYLTEKRRQELAHELGLNESQIKIWFQNKRAKLKKST. The span at 145–163 shows a compositional bias: polar residues; sequence STSSVPRDRCSSVTPNPHN.

It belongs to the engrailed homeobox family. Expressed in seam cells.

The protein resides in the nucleus. It localises to the cytoplasm. Its function is as follows. Transcriptional regulator which binds to DNA to regulate gene expression and promote seam cell development and differentiation during embryogenesis. Plays a role in maintaining the boundaries between the lateral rows of seam cells and the ventral and dorsal row of epidermal cells during embryonic development. Negatively regulates the expression of the fusion effector protein eff-1 to prevent seam cell fusion with the dorsal and ventral epidermal cells during embryonic elongation. Positively regulates seam cell self-renewal and expansion during the L2 larval stage to promote seam cell development. This role does not seem to be via regulation of eff-1 expression. Specifically, it is required for the asymmetric division of the V5.p seam cell during the L2 larval stage, and in turn the asymmetric nuclear distribution of pop-1 in V5.p daughter cells. This chain is Homeobox protein engrailed-like ceh-16, found in Caenorhabditis elegans.